A 290-amino-acid chain; its full sequence is MDYKHFKGKHANIVIEIISLLEKGVKKAQEILEKPDAGSYTKLENSSGDTPIKADLALDKFLEENFLSLENIKSVFSEEKETPVTKENGSYLIAYDPLDGSSVMEANFLVGTIIGVYEKDYKAQNLVASLYVVFGHKIELVVALEEVYRYAFYQNKFHFIETIVLENKGKIIASGGNQKDFSLGLKKALEGFFAENYRLRYSGSMVADVHHVLIKKGGMFSYPQKKLRKLFEVFPLALIIEKAKGEAFYFDKGVKKRLLEQSVESYHEKSECYLASPHEAQILEKYLKGE.

4 residues coordinate Mg(2+): Glu78, Asp96, Leu98, and Asp99. Residues 99 to 102 (DGSS), Tyr201, and Lys226 contribute to the substrate site. Glu232 is a binding site for Mg(2+).

This sequence belongs to the FBPase class 1 family. As to quaternary structure, homotetramer. Requires Mg(2+) as cofactor.

The protein resides in the cytoplasm. It carries out the reaction beta-D-fructose 1,6-bisphosphate + H2O = beta-D-fructose 6-phosphate + phosphate. Its pathway is carbohydrate biosynthesis; gluconeogenesis. The polypeptide is Fructose-1,6-bisphosphatase class 1 (Helicobacter pylori (strain G27)).